Here is a 412-residue protein sequence, read N- to C-terminus: Exodeoxyribonuclease 7 large subunit (412 aa).

The protein belongs to the XseA family. As to quaternary structure, heterooligomer composed of large and small subunits.

It is found in the cytoplasm. The enzyme catalyses Exonucleolytic cleavage in either 5'- to 3'- or 3'- to 5'-direction to yield nucleoside 5'-phosphates.. In terms of biological role, bidirectionally degrades single-stranded DNA into large acid-insoluble oligonucleotides, which are then degraded further into small acid-soluble oligonucleotides. This is Exodeoxyribonuclease 7 large subunit from Nostoc sp. (strain PCC 7120 / SAG 25.82 / UTEX 2576).